The sequence spans 257 residues: Imidazole glycerol phosphate synthase subunit HisF (257 aa).

Active-site residues include Asp-11 and Asp-130.

It belongs to the HisA/HisF family. As to quaternary structure, heterodimer of HisH and HisF.

It is found in the cytoplasm. It catalyses the reaction 5-[(5-phospho-1-deoxy-D-ribulos-1-ylimino)methylamino]-1-(5-phospho-beta-D-ribosyl)imidazole-4-carboxamide + L-glutamine = D-erythro-1-(imidazol-4-yl)glycerol 3-phosphate + 5-amino-1-(5-phospho-beta-D-ribosyl)imidazole-4-carboxamide + L-glutamate + H(+). The protein operates within amino-acid biosynthesis; L-histidine biosynthesis; L-histidine from 5-phospho-alpha-D-ribose 1-diphosphate: step 5/9. Functionally, IGPS catalyzes the conversion of PRFAR and glutamine to IGP, AICAR and glutamate. The HisF subunit catalyzes the cyclization activity that produces IGP and AICAR from PRFAR using the ammonia provided by the HisH subunit. The protein is Imidazole glycerol phosphate synthase subunit HisF of Shewanella sp. (strain W3-18-1).